Here is a 344-residue protein sequence, read N- to C-terminus: KRR1 small subunit processome component homolog (344 aa).

One can recognise a KH domain in the interval 126-194 (DIIKIGNLVH…VRDIVLDTMN (69 aa)). Over residues 230 to 246 (KNKNISKRKQPKNKKPK) the composition is skewed to basic residues. The segment at 230–326 (KNKNISKRKQ…KRAAEDNKVD (97 aa)) is disordered. The stretch at 271–344 (FLNKEQKQAK…MKANKKKERS (74 aa)) forms a coiled coil. Over residues 272 to 303 (LNKEQKQAKRQQERTAKQAEAAKKQDERRNKD) the composition is skewed to basic and acidic residues.

This sequence belongs to the KRR1 family. In terms of assembly, monomer. Component of the ribosomal small subunit (SSU) processome.

It is found in the nucleus. It localises to the nucleolus. Required for 40S ribosome biogenesis. Involved in nucleolar processing of pre-18S ribosomal RNA and ribosome assembly. Binds to RNA. Required for female germline development, cell viability during eye development and for survival of dividing cells and epithelial cells during early wing disk development. The polypeptide is KRR1 small subunit processome component homolog (Drosophila mojavensis (Fruit fly)).